Here is a 148-residue protein sequence, read N- to C-terminus: 3-dehydroquinate dehydratase (148 aa).

Tyrosine 24 serves as the catalytic Proton acceptor. Residues asparagine 75, histidine 81, and aspartate 88 each contribute to the substrate site. The active-site Proton donor is the histidine 101. Substrate is bound by residues 102 to 103 (LS) and arginine 112.

It belongs to the type-II 3-dehydroquinase family. As to quaternary structure, homododecamer.

It catalyses the reaction 3-dehydroquinate = 3-dehydroshikimate + H2O. It functions in the pathway metabolic intermediate biosynthesis; chorismate biosynthesis; chorismate from D-erythrose 4-phosphate and phosphoenolpyruvate: step 3/7. In terms of biological role, catalyzes a trans-dehydration via an enolate intermediate. This Sinorhizobium medicae (strain WSM419) (Ensifer medicae) protein is 3-dehydroquinate dehydratase.